We begin with the raw amino-acid sequence, 2230 residues long: Golgin subfamily A member 4 (2230 aa).

The interval 1-64 (MFKKLKQKIS…SGDTQSFAQK (64 aa)) is disordered. Ser-10 is modified (phosphoserine). A compositionally biased stretch (low complexity) spans 12–41 (EQQQLQQALAPAQASSNSSTPTRMRSRTSS). Position 39 is a phosphothreonine (Thr-39). Ser-41, Ser-71, Ser-78, and Ser-89 each carry phosphoserine. Residues 87-107 (SSSKESLVRTSSRESLNRLDL) are compositionally biased toward basic and acidic residues. A disordered region spans residues 87–127 (SSSKESLVRTSSRESLNRLDLDSSTASFDPPSDMDSEAEDL). The tract at residues 133 to 203 (SLNKEQLIQR…EELQMDQQAK (71 aa)) is interaction with MACF1. Positions 133–2185 (SLNKEQLIQR…EYLRKVLFEY (2053 aa)) form a coiled coil. Ser-266 is modified (phosphoserine). Asn-585 and Asn-1612 each carry an N-linked (GlcNAc...) asparagine glycan. The GRIP domain occupies 2168–2215 (LFGEPTEFEYLRKVLFEYMMGRETKTMAKVITTVLKFPDDQTQKILER). Thr-2223 is modified (phosphothreonine).

Homodimer. Interacts with RAB6A. Interacts with GTP-bound ARL1 and ARL3. Interacts with MACF1. Directly interacts with TBC1D23. Interacts with FAM91A1; this interaction may be mediated by TBC1D23.

It is found in the cytoplasm. It localises to the golgi apparatus membrane. The protein localises to the golgi apparatus. The protein resides in the trans-Golgi network membrane. Involved in vesicular trafficking at the Golgi apparatus level. May play a role in delivery of transport vesicles containing GPI-linked proteins from the trans-Golgi network through its interaction with MACF1. Involved in endosome-to-Golgi trafficking. This is Golgin subfamily A member 4 (GOLGA4) from Homo sapiens (Human).